Reading from the N-terminus, the 340-residue chain is Peroxisomal adenine nucleotide transporter 1 (340 aa).

Solcar repeat units lie at residues glutamate 4 to histidine 119, phenylalanine 133 to alanine 218, and leucine 236 to methionine 320. Transmembrane regions (helical) follow at residues alanine 6 to alanine 26, glycine 96 to valine 116, leucine 139 to valine 159, glycine 190 to alanine 210, phenylalanine 242 to alanine 262, and tryptophan 293 to phenylalanine 313.

The protein belongs to the mitochondrial carrier (TC 2.A.29) family.

Its subcellular location is the peroxisome membrane. Adenine nucleotide transporter involved in the uniport of ATP and adenine nucleotide hetero-exchange transport between the cytosol and the peroxisomal lumen. This transport is accompanied by a proton transport from the peroxisomal lumen to the cytosol. Transport of ATP into the peroxisome is required for beta-oxidation of medium-chain fatty acids. The sequence is that of Peroxisomal adenine nucleotide transporter 1 (ANT1) from Eremothecium gossypii (strain ATCC 10895 / CBS 109.51 / FGSC 9923 / NRRL Y-1056) (Yeast).